A 665-amino-acid polypeptide reads, in one-letter code: Protein phosphatase 1 regulatory subunit 21 (665 aa).

4 coiled-coil regions span residues 1 to 84 (MTDL…SESK), 125 to 206 (LEAQ…RKYQ), 426 to 477 (ESRE…EAQV), and 586 to 627 (KRLA…EDQL).

In terms of assembly, component of the FERRY complex.

It is found in the early endosome. Component of the FERRY complex (Five-subunit Endosomal Rab5 and RNA/ribosome intermediary). The FERRY complex directly interacts with mRNAs and RAB5A, and functions as a RAB5A effector involved in the localization and the distribution of specific mRNAs most likely by mediating their endosomal transport. The complex recruits mRNAs and ribosomes to early endosomes through direct mRNA-interaction. Putative regulator of protein phosphatase 1 (PP1) activity. May play a role in the endosomal sorting process or in endosome maturation pathway. This chain is Protein phosphatase 1 regulatory subunit 21 (ppp1r21), found in Danio rerio (Zebrafish).